The chain runs to 152 residues: Large ribosomal subunit protein bL9 (152 aa).

It belongs to the bacterial ribosomal protein bL9 family.

Binds to the 23S rRNA. The sequence is that of Large ribosomal subunit protein bL9 from Prochlorococcus marinus (strain MIT 9211).